The chain runs to 372 residues: Putative aminopeptidase SgcX (372 aa).

Residues His-67 and Asp-180 each contribute to the a divalent metal cation site. The Proton acceptor role is filled by Glu-212. Glu-213, Asp-235, and His-329 together coordinate a divalent metal cation.

Belongs to the peptidase M42 family. A divalent metal cation is required as a cofactor.

The protein is Putative aminopeptidase SgcX (sgcX) of Salmonella typhimurium (strain LT2 / SGSC1412 / ATCC 700720).